The following is a 470-amino-acid chain: Neuraminidase (470 aa).

Over 1 to 6 (MNPNQK) the chain is Intravirion. The chain crosses the membrane as a helical span at residues 7–27 (IITIGSICMAIGIISLILQIG). Residues 11-33 (GSICMAIGIISLILQIGNIISIW) form an involved in apical transport and lipid raft association region. The Virion surface portion of the chain corresponds to 28–470 (NIISIWVSHS…GAELPFTIDK (443 aa)). The interval 36–90 (HSIQTGSQNHTGICNQRIITYENSTWVNQTYVNISNTNVVAGKDTTSMTLAGNSS) is hypervariable stalk region. Residues Asn44, Asn58, Asn63, Asn68, and Asn88 are each glycosylated (N-linked (GlcNAc...) asparagine; by host). Residues 91 to 470 (LCPIRGWAIY…GAELPFTIDK (380 aa)) form a head of neuraminidase region. Cystine bridges form between Cys92–Cys417, Cys124–Cys129, Cys184–Cys231, Cys233–Cys238, Cys279–Cys292, Cys281–Cys290, Cys318–Cys335, and Cys421–Cys447. Arg118 is a substrate binding site. Asn146 carries an N-linked (GlcNAc...) asparagine; by host glycan. Catalysis depends on Asp151, which acts as the Proton donor/acceptor. Arg152 lines the substrate pocket. Residue Asn235 is glycosylated (N-linked (GlcNAc...) asparagine; by host). 277-278 (EE) contacts substrate. Substrate is bound at residue Arg293. Positions 294, 298, and 324 each coordinate Ca(2+). Asn365 carries N-linked (GlcNAc...) asparagine; by host glycosylation. Arg368 serves as a coordination point for substrate. Tyr402 (nucleophile) is an active-site residue. An N-linked (GlcNAc...) asparagine; by host glycan is attached at Asn455.

It belongs to the glycosyl hydrolase 34 family. In terms of assembly, homotetramer. Ca(2+) serves as cofactor. N-glycosylated.

It localises to the virion membrane. The protein localises to the host apical cell membrane. It carries out the reaction Hydrolysis of alpha-(2-&gt;3)-, alpha-(2-&gt;6)-, alpha-(2-&gt;8)- glycosidic linkages of terminal sialic acid residues in oligosaccharides, glycoproteins, glycolipids, colominic acid and synthetic substrates.. Inhibited by the neuraminidase inhibitors zanamivir (Relenza) and oseltamivir (Tamiflu). These drugs interfere with the release of progeny virus from infected cells and are effective against all influenza strains. Resistance to neuraminidase inhibitors is quite rare. In terms of biological role, catalyzes the removal of terminal sialic acid residues from viral and cellular glycoconjugates. Cleaves off the terminal sialic acids on the glycosylated HA during virus budding to facilitate virus release. Additionally helps virus spread through the circulation by further removing sialic acids from the cell surface. These cleavages prevent self-aggregation and ensure the efficient spread of the progeny virus from cell to cell. Otherwise, infection would be limited to one round of replication. Described as a receptor-destroying enzyme because it cleaves a terminal sialic acid from the cellular receptors. May facilitate viral invasion of the upper airways by cleaving the sialic acid moieties on the mucin of the airway epithelial cells. Likely to plays a role in the budding process through its association with lipid rafts during intracellular transport. May additionally display a raft-association independent effect on budding. Plays a role in the determination of host range restriction on replication and virulence. Sialidase activity in late endosome/lysosome traffic seems to enhance virus replication. The chain is Neuraminidase from Influenza A virus (strain A/Brazil/11/1978 H1N1).